Here is a 265-residue protein sequence, read N- to C-terminus: Small ribosomal subunit protein uS3 (265 aa).

Residues 39 to 111 (IREFLNENFS…EVILNIIEVR (73 aa)) form the KH type-2 domain. Residues 224–250 (FEAGNQRRGQKRRPRNDQPVKDLNKEK) are disordered. Basic and acidic residues predominate over residues 238–250 (RNDQPVKDLNKEK).

Belongs to the universal ribosomal protein uS3 family. Part of the 30S ribosomal subunit. Forms a tight complex with proteins S10 and S14.

Functionally, binds the lower part of the 30S subunit head. Binds mRNA in the 70S ribosome, positioning it for translation. The protein is Small ribosomal subunit protein uS3 of Acholeplasma laidlawii.